A 153-amino-acid chain; its full sequence is Ribosome maturation factor RimP (153 aa).

This sequence belongs to the RimP family.

The protein resides in the cytoplasm. Functionally, required for maturation of 30S ribosomal subunits. In Chromohalobacter salexigens (strain ATCC BAA-138 / DSM 3043 / CIP 106854 / NCIMB 13768 / 1H11), this protein is Ribosome maturation factor RimP.